Reading from the N-terminus, the 400-residue chain is Endoplasmin (400 aa).

K1 bears the N6-succinyllysine mark. Residue N42 is glycosylated (N-linked (GlcNAc...) asparagine). S44 is subject to Phosphoserine. K76 bears the N6-acetyllysine mark. Residues N78 and N99 are each glycosylated (N-linked (GlcNAc...) asparagine). Position 230 is an N6-succinyllysine (K230). Residues 346–400 form a disordered region; the sequence is IDPEAQVEEEPEEEPEDTTEDTEQDEEEEVDAGTEEEEEEEQETAKESTAEKDEL. A compositionally biased stretch (acidic residues) spans 350-387; the sequence is AQVEEEPEEEPEDTTEDTEQDEEEEVDAGTEEEEEEEQ. Residue T379 is modified to Phosphothreonine. Over residues 388 to 400 the composition is skewed to basic and acidic residues; sequence ETAKESTAEKDEL. Positions 397-400 match the Prevents secretion from ER motif; that stretch reads KDEL.

The protein belongs to the heat shock protein 90 family. In terms of assembly, homodimer; disulfide-linked. Component of an EIF2 complex at least composed of CELF1/CUGBP1, CALR, CALR3, EIF2S1, EIF2S2, HSP90B1 and HSPA5. Part of a large chaperone multiprotein complex comprising DNAJB11, HSP90B1, HSPA5, HYOU, PDIA2, PDIA4, PDIA6, PPIB, SDF2L1, UGGT1 and very small amounts of ERP29, but not, or at very low levels, CALR nor CANX. Interacts with AIMP1; regulates its retention in the endoplasmic reticulum. Hyperglycosylated form interacts with OS9; promoting its degradation by the endoplasmic reticulum associated degradation (ERAD). Interacts with CNPY3. This interaction is disrupted in the presence of ATP. Interacts with TLR4 and TLR9, but not with TLR3. Interacts with MZB1 in a calcium-dependent manner. Interacts with METTL23. Interacts with IL1B; the interaction facilitates cargo translocation into the ERGIC. Interacts with EIF2AK3. Phosphorylated by CK2. Post-translationally, N-glycosylated cotranslationally at Asn-217 by STT3A-containing OST-A complex: this glycosylation is constitutive. In response to various stress, 5 additional facultative sites (Asn-62, Asn-107, Asn-445, Asn-481 and Asn-502) can be glycosylated post-translationally by STT3B-containing OST-B complex, leading to a hyperglycosylated form that is degraded by the ER-associated degradation (ERAD) pathway. In normal conditions, the OST-A complex together with CCDC134 prevent glycosylation at facultative sites during protein folding, thereby preventing hyperglycosylation. Mechanistically, nascent HSP90B1 is tethered during translation to a specialized CCDC134-containing translocon that forms a microenvironment for its folding, in which STT3A associates with the SRT pseudosubstrate motif, and prevents access to facultative glycosylation sites until folding is completed, rendering its facultative sites inaccessible to the OST-B complex.

The protein localises to the endoplasmic reticulum lumen. It localises to the sarcoplasmic reticulum lumen. Its subcellular location is the melanosome. It carries out the reaction ATP + H2O = ADP + phosphate + H(+). Functionally, ATP-dependent chaperone involved in the processing of proteins in the endoplasmic reticulum, regulating their transport. Together with MESD, acts as a modulator of the Wnt pathway by promoting the folding of LRP6, a coreceptor of the canonical Wnt pathway. When associated with CNPY3, required for proper folding of Toll-like receptors. Promotes folding and trafficking of TLR4 to the cell surface. May participate in the unfolding of cytosolic leaderless cargos (lacking the secretion signal sequence) such as the interleukin 1/IL-1 to facilitate their translocation into the ERGIC (endoplasmic reticulum-Golgi intermediate compartment) and secretion; the translocation process is mediated by the cargo receptor TMED10. In Mesocricetus auratus (Golden hamster), this protein is Endoplasmin (HSP90B1).